Here is a 198-residue protein sequence, read N- to C-terminus: Interferon gamma (198 aa).

Residues 1–23 (MMVSTARAVVCLSLCLCVCQVRG) form the signal peptide. N-linked (GlcNAc...) asparagine glycosylation is found at Asn-31, Asn-42, and Asn-174. A disordered region spans residues 173–198 (SNNTKMQRRRRRRRRQARKVKTPTRA). The span at 178 to 198 (MQRRRRRRRRQARKVKTPTRA) shows a compositional bias: basic residues.

It belongs to the type II (or gamma) interferon family. As to quaternary structure, homodimer.

It localises to the secreted. Its function is as follows. Cytokine which binds to interferon gamma receptor 1 (ifngr1). Also binds with lower affinity to interferon gamma receptor 1-like (ifngr1l). Has activating effects on macrophages and neutrophils. In Paralichthys olivaceus (Bastard halibut), this protein is Interferon gamma.